The following is a 143-amino-acid chain: Peptide methionine sulfoxide reductase MsrB (143 aa).

Positions 5-127 (KEKRLKELNR…NSAALKFIPK (123 aa)) constitute a MsrB domain. Cys-116 functions as the Nucleophile in the catalytic mechanism.

This sequence belongs to the MsrB Met sulfoxide reductase family.

The enzyme catalyses L-methionyl-[protein] + [thioredoxin]-disulfide + H2O = L-methionyl-(R)-S-oxide-[protein] + [thioredoxin]-dithiol. The sequence is that of Peptide methionine sulfoxide reductase MsrB from Bacillus pumilus (strain SAFR-032).